Reading from the N-terminus, the 467-residue chain is MASLLQSERVLYLVQGEKKVRAPLSQLYFCRYCSELRSLECVSHEVDSHYCPSCLENMPSAEAKLKKNRCANCFDCPGCMHTLSTRATSISTQLPDDPAKTAVKKAYYLACGFCRWTSRDVGMADKSVASGGWQEPDHPHTQRMNKLIEYYQQLAQKEKVERDRKKLARRRNYMPLAFSQHTIHVVDKYGLGTRLQRPRAGTTITALAGLSLKEGEDQKEIKIEPAQAVDEVEPLPEDYYTRPVNLTEVTTLQQRLLQPDFQPICASQLYPRHKHLLIKRSLRCRQCEHNLSKPEFNPTSIKFKIQLVAVNYIPEVRIMSIPNLRYMKESQVLLTLTNPVENLTHVTLLECEEGDPDDTNSTAKVSVPPTELVLAGKDAAAEYDELAEPQDFPDDPDVVAFRKANKVGVFIKVTPQREEGDVTVCFKLKHDFKNLAAPIRPVEEADPGAEVSWLTQHVELSLGPLLP.

The residue at position 2 (Ala2) is an N-acetylalanine. A Glycyl lysine isopeptide (Lys-Gly) (interchain with G-Cter in SUMO2) cross-link involves residue Lys222. Thr414 carries the post-translational modification Phosphothreonine.

The protein belongs to the dynactin subunit 4 family. As to quaternary structure, subunit of dynactin, a multiprotein complex part of a tripartite complex with dynein and a adapter, such as BICDL1, BICD2 or HOOK3. The dynactin complex is built around ACTR1A/ACTB filament and consists of an actin-related filament composed of a shoulder domain, a pointed end and a barbed end. Its length is defined by its flexible shoulder domain. The soulder is composed of 2 DCTN1 subunits, 4 DCTN2 and 2 DCTN3. The 4 DCNT2 (via N-terminus) bind the ACTR1A filament and act as molecular rulers to determine the length. The pointed end is important for binding dynein-dynactin cargo adapters. Consists of 4 subunits: ACTR10, DCNT4, DCTN5 and DCTN6. The barbed end is composed of a CAPZA1:CAPZB heterodimers, which binds ACTR1A/ACTB filament and dynactin and stabilizes dynactin. Interacts with ATP7B, but not ATP7A, in a copper-dependent manner. Interacts with ANK2; this interaction is required for localization at costameres. Interacts with N4BP2L1.

The protein localises to the cytoplasm. The protein resides in the cytoskeleton. It localises to the microtubule organizing center. It is found in the centrosome. Its subcellular location is the stress fiber. The protein localises to the cell cortex. The protein resides in the myofibril. It localises to the sarcomere. Functionally, part of the dynactin complex that activates the molecular motor dynein for ultra-processive transport along microtubules. Together with dynein is involved in spindle assembly and cytokinesis. The polypeptide is Dynactin subunit 4 (DCTN4) (Sus scrofa (Pig)).